The primary structure comprises 107 residues: Integration host factor subunit beta (107 aa).

The tract at residues 87-107 (RERVNNGTRKNGGSADAASGG) is disordered.

It belongs to the bacterial histone-like protein family. Heterodimer of an alpha and a beta chain.

In terms of biological role, this protein is one of the two subunits of integration host factor, a specific DNA-binding protein that functions in genetic recombination as well as in transcriptional and translational control. This Granulibacter bethesdensis (strain ATCC BAA-1260 / CGDNIH1) protein is Integration host factor subunit beta.